The primary structure comprises 258 residues: Small ribosomal subunit protein uS3 (258 aa).

The KH type-2 domain maps to 16–85 (IDEYLEKELE…NPQVEVKEVD (70 aa)). The segment at 198–258 (RVTETPAEEA…KDADGEESEK (61 aa)) is disordered. Positions 203 to 245 (PAEEASEASEVVEDLEEVEDLEEIEDLEEVEDLEEVEDLEDTE) are enriched in acidic residues.

It belongs to the universal ribosomal protein uS3 family. As to quaternary structure, part of the 30S ribosomal subunit.

Its function is as follows. Binds the lower part of the 30S subunit head. The sequence is that of Small ribosomal subunit protein uS3 from Methanothermobacter thermautotrophicus (strain ATCC 29096 / DSM 1053 / JCM 10044 / NBRC 100330 / Delta H) (Methanobacterium thermoautotrophicum).